A 351-amino-acid polypeptide reads, in one-letter code: Nicotinate-nucleotide--dimethylbenzimidazole phosphoribosyltransferase (351 aa).

Glutamate 317 acts as the Proton acceptor in catalysis.

This sequence belongs to the CobT family.

It catalyses the reaction 5,6-dimethylbenzimidazole + nicotinate beta-D-ribonucleotide = alpha-ribazole 5'-phosphate + nicotinate + H(+). The protein operates within nucleoside biosynthesis; alpha-ribazole biosynthesis; alpha-ribazole from 5,6-dimethylbenzimidazole: step 1/2. In terms of biological role, catalyzes the synthesis of alpha-ribazole-5'-phosphate from nicotinate mononucleotide (NAMN) and 5,6-dimethylbenzimidazole (DMB). The polypeptide is Nicotinate-nucleotide--dimethylbenzimidazole phosphoribosyltransferase (Bradyrhizobium sp. (strain ORS 278)).